Here is a 338-residue protein sequence, read N- to C-terminus: Probable cytosolic iron-sulfur protein assembly protein Ciao1 (338 aa).

WD repeat units lie at residues 12 to 51 (GHRG…RWVP), 58 to 97 (GHTR…FECN), 102 to 141 (GHEN…EYEC), 147 to 186 (THSQ…SDWS), 193 to 232 (SHDS…NEFG), 234 to 252 (ACPD…LSGF), 253 to 291 (HSRA…PANE), and 302 to 338 (AHSQ…EDDE).

This sequence belongs to the WD repeat CIA1 family.

Its function is as follows. Essential component of the cytosolic iron-sulfur (Fe/S) protein assembly machinery. Required for the maturation of extramitochondrial Fe/S proteins. The protein is Probable cytosolic iron-sulfur protein assembly protein Ciao1 of Culex quinquefasciatus (Southern house mosquito).